We begin with the raw amino-acid sequence, 110 residues long: Host transcription reprogramming factor 2 (110 aa).

Positions 1 to 18 are cleaved as a signal peptide; that stretch reads MHLKASSILALLVIGANA. Residues 68-96 form a C2H2-type zinc finger; that stretch reads IMCGYCGKRFWNKPDLEKHIKLKPSKGGH. Positions 88 to 110 are disordered; it reads KLKPSKGGHKGQPYKEHSWNRPT. Basic and acidic residues predominate over residues 100–110; sequence PYKEHSWNRPT.

It is found in the secreted. Its subcellular location is the host nucleus. Its function is as follows. Secreted effector that translocates into the nuclei of host cells to reprogram the expression of immunity-associated genes by binding to effector binding elements (EBEs) in rice. Binds the 5'-CCACCTCC-3' EBE of promoters from targeted rice genes and probably recruits a yet to be determined host repressor. Causes ambivalent immunity with increased susceptibility to the hemibiotrophic pathogens Magnaporthe oryzae and Xanthomonas oryzae pv. oryzae, but enhances resistance to Cochliobolus miyabeanus, a necrotrophic pathogen. The chain is Host transcription reprogramming factor 2 from Pyricularia oryzae (strain 70-15 / ATCC MYA-4617 / FGSC 8958) (Rice blast fungus).